The following is a 326-amino-acid chain: G-protein coupled receptor 171 (326 aa).

Residues 1-19 (MTNSSMFCPIYRDLEPFTY) are Extracellular-facing. A helical transmembrane segment spans residues 20–40 (FFYLVYLIGIIGSCFATWAFI). Topologically, residues 41–48 (QKSTNHRC) are cytoplasmic. The helical transmembrane segment at 49-69 (VSIYLINLLTADFLLTLALPV) threads the bilayer. Over 70 to 89 (KIVVDLGVAPWKLRIFHCQV) the chain is Extracellular. Cysteines 87 and 165 form a disulfide. A helical membrane pass occupies residues 90-110 (TACLIYINMYLSIIFLAFVSI). The Cytoplasmic segment spans residues 111–133 (DRCLQLVHSCKIYRIQEPGFAKM). Residues 134 to 154 (ISAVVWLMVLLIMVPNMVIPI) traverse the membrane as a helical segment. The Extracellular portion of the chain corresponds to 155-182 (KNIKEKSNVGCMEFKREFGKNWHLLTNF). Residues 183–203 (ICVAIFLNFSAIILISNFLVI) form a helical membrane-spanning segment. The Cytoplasmic segment spans residues 204-221 (RQLYRNRDNANYPSVKSA). Residues 222-242 (LLNILLVTASYIICFVPYHAV) form a helical membrane-spanning segment. Topologically, residues 243–268 (RIPYTLSQTEVISDCSTRIALFKAKE) are extracellular. Residues 269–289 (ATLLLAVSNLCFDPILYYHLS) form a helical membrane-spanning segment. Topologically, residues 290–326 (KAFRLKVTETFASPQKMKAREEKPRRENDVQSTGSAC) are cytoplasmic. The segment at 305–326 (KMKAREEKPRRENDVQSTGSAC) is disordered. A compositionally biased stretch (basic and acidic residues) spans 307–318 (KAREEKPRREND).

This sequence belongs to the G-protein coupled receptor 1 family.

The protein resides in the cell membrane. In terms of biological role, G-protein coupled receptor for Big LEN, a 16-amino acid neuropeptide produced from the precursor protein, proSAAS (encoded by PCSK1N). Acts through a G(i)-alpha-mediated pathway in response to Big LEN. Big LEN-GPR171 system plays an important role in regulating feeding and metabolism. Also plays a role in modulating fear and anxiety-like behaviors in the basolateral amygdala. Big LEN-GPR171 modulates the mu-type opioid receptor signaling and antinociception. Acts as a negative regulator T cell function. This Rattus norvegicus (Rat) protein is G-protein coupled receptor 171.